A 626-amino-acid polypeptide reads, in one-letter code: Janus kinase and microtubule-interacting protein 1 (626 aa).

The interval 1-25 (MSKKGRSKGEKPETETDSVQMANEE) is disordered. The interval 1 to 365 (MSKKGRSKGE…KLKSLTRENV (365 aa)) is mediates association with microtubules. Coiled-coil stretches lie at residues 13–255 (ETET…EAER) and 284–413 (ERDV…DDLS). The interval 365-626 (VEMKEKLSAQ…ILFEPKLKFV (262 aa)) is mediates interaction with TYK2 and GABBR1. S382 bears the Phosphoserine mark. Positions 452-461 (ETLSETSYNT) are enriched in polar residues. A disordered region spans residues 452–481 (ETLSETSYNTDRTDRTPATPEEDLDETTTR). Phosphothreonine is present on T470. Positions 490-604 (QLTREYQALQ…EFRVLELEVR (115 aa)) form a coiled coil.

The protein belongs to the JAKMIP family. Homodimer. Interacts with JAK1 and TYK2. Forms a complex with GABBR1 and KIF5B/kinesin-1. Phosphorylated. In terms of tissue distribution, specifically expressed in brain and testis by spermatogonia, spermatocytes, spermatozoa and Sertoli cells (at protein level).

It localises to the cytoplasm. The protein localises to the cytoskeleton. The protein resides in the membrane. In terms of biological role, associates with microtubules and may play a role in the microtubule-dependent transport of the GABA-B receptor. May play a role in JAK1 signaling and regulate microtubule cytoskeleton rearrangements. The chain is Janus kinase and microtubule-interacting protein 1 (Jakmip1) from Rattus norvegicus (Rat).